Consider the following 177-residue polypeptide: Isopentenyl-diphosphate Delta-isomerase (177 aa).

His-22 and His-28 together coordinate Mn(2+). The Nudix hydrolase domain maps to 26–160; sequence LRHKAISVFV…PERFTPWLRI (135 aa). Cys-62 is an active-site residue. Mn(2+) is bound at residue His-64. Residue Glu-82 participates in Mg(2+) binding. Mn(2+)-binding residues include Glu-108 and Glu-110. Glu-110 is an active-site residue.

The protein belongs to the IPP isomerase type 1 family. It depends on Mg(2+) as a cofactor. Requires Mn(2+) as cofactor.

Its subcellular location is the cytoplasm. The catalysed reaction is isopentenyl diphosphate = dimethylallyl diphosphate. The protein operates within isoprenoid biosynthesis; dimethylallyl diphosphate biosynthesis; dimethylallyl diphosphate from isopentenyl diphosphate: step 1/1. It functions in the pathway porphyrin-containing compound metabolism; chlorophyll biosynthesis. Functionally, catalyzes the 1,3-allylic rearrangement of the homoallylic substrate isopentenyl (IPP) to its highly electrophilic allylic isomer, dimethylallyl diphosphate (DMAPP). The polypeptide is Isopentenyl-diphosphate Delta-isomerase (Cereibacter sphaeroides (strain ATCC 17025 / ATH 2.4.3) (Rhodobacter sphaeroides)).